A 520-amino-acid polypeptide reads, in one-letter code: UvrABC system protein C (520 aa).

In terms of domain architecture, GIY-YIG spans 11–89; sequence EEPGCYQFKD…IKKYQPKYNI (79 aa). Residues 195-230 form the UVR domain; that stretch reads QDLIYDLRKEMETFAAAEEYEKALVIRDRIAAIENL.

The protein belongs to the UvrC family. In terms of assembly, interacts with UvrB in an incision complex.

The protein resides in the cytoplasm. In terms of biological role, the UvrABC repair system catalyzes the recognition and processing of DNA lesions. UvrC both incises the 5' and 3' sides of the lesion. The N-terminal half is responsible for the 3' incision and the C-terminal half is responsible for the 5' incision. This chain is UvrABC system protein C, found in Methanospirillum hungatei JF-1 (strain ATCC 27890 / DSM 864 / NBRC 100397 / JF-1).